The following is a 202-amino-acid chain: Nucleoside triphosphate pyrophosphatase (202 aa).

Asp-79 (proton acceptor) is an active-site residue.

This sequence belongs to the Maf family. The cofactor is a divalent metal cation.

The protein resides in the cytoplasm. It catalyses the reaction a ribonucleoside 5'-triphosphate + H2O = a ribonucleoside 5'-phosphate + diphosphate + H(+). It carries out the reaction a 2'-deoxyribonucleoside 5'-triphosphate + H2O = a 2'-deoxyribonucleoside 5'-phosphate + diphosphate + H(+). Nucleoside triphosphate pyrophosphatase. May have a dual role in cell division arrest and in preventing the incorporation of modified nucleotides into cellular nucleic acids. The sequence is that of Nucleoside triphosphate pyrophosphatase from Rhodospirillum rubrum (strain ATCC 11170 / ATH 1.1.1 / DSM 467 / LMG 4362 / NCIMB 8255 / S1).